The chain runs to 69 residues: Putative membrane protein insertion efficiency factor (69 aa).

Belongs to the UPF0161 family.

It is found in the cell membrane. In terms of biological role, could be involved in insertion of integral membrane proteins into the membrane. In Desulfitobacterium hafniense (strain Y51), this protein is Putative membrane protein insertion efficiency factor.